Consider the following 309-residue polypeptide: L-aminoadipate-semialdehyde dehydrogenase-phosphopantetheinyl transferase (309 aa).

Residues Arg47, 86–91, and 108–111 each bind CoA; these read RTAKGK and NISH. Mg(2+) is bound by residues Asp129 and Glu181. 181–185 contacts CoA; sequence ESFIK. Residue Ser258 is modified to Phosphoserine.

Belongs to the P-Pant transferase superfamily. AcpS family. As to quaternary structure, monomer. Mg(2+) is required as a cofactor.

Its subcellular location is the cytoplasm. It is found in the cytosol. It carries out the reaction apo-[ACP] + CoA = holo-[ACP] + adenosine 3',5'-bisphosphate + H(+). The catalysed reaction is apo-[ACP] + acetyl-CoA = acetyl-[ACP] + adenosine 3',5'-bisphosphate + H(+). Catalyzes the post-translational modification of target proteins by phosphopantetheine. Can transfer the 4'-phosphopantetheine moiety from coenzyme A, regardless of whether the CoA is presented in the free thiol form or as an acetyl thioester, to a serine residue of a broad range of acceptors including the acyl carrier domain of FASN. This chain is L-aminoadipate-semialdehyde dehydrogenase-phosphopantetheinyl transferase (AASDHPPT), found in Pongo abelii (Sumatran orangutan).